A 602-amino-acid polypeptide reads, in one-letter code: Elongation factor 4 (602 aa).

Positions 7-189 (KYIRNFSIVA…AIVNKVPAPD (183 aa)) constitute a tr-type G domain. GTP is bound by residues 19-24 (DHGKST) and 136-139 (NKID).

The protein belongs to the TRAFAC class translation factor GTPase superfamily. Classic translation factor GTPase family. LepA subfamily.

It localises to the cell membrane. It carries out the reaction GTP + H2O = GDP + phosphate + H(+). In terms of biological role, required for accurate and efficient protein synthesis under certain stress conditions. May act as a fidelity factor of the translation reaction, by catalyzing a one-codon backward translocation of tRNAs on improperly translocated ribosomes. Back-translocation proceeds from a post-translocation (POST) complex to a pre-translocation (PRE) complex, thus giving elongation factor G a second chance to translocate the tRNAs correctly. Binds to ribosomes in a GTP-dependent manner. The chain is Elongation factor 4 from Clostridium botulinum (strain Kyoto / Type A2).